The following is a 204-amino-acid chain: Ras-related protein R-Ras2 (204 aa).

Ala-2 is modified (N-acetylalanine). Residue 21–29 (GGGGVGKSA) coordinates GTP. Positions 43–51 (YDPTIEDSY) match the Effector region motif. Residues 68-72 (DTAGQ), 127-130 (NKAD), and 157-159 (SAK) each bind GTP. The residue at position 186 (Ser-186) is a Phosphoserine. Residues Lys-192, Lys-194, Lys-196, and Lys-197 are each lipidated (N6-palmitoyl lysine). Cys-199 carries S-palmitoyl cysteine lipidation. Cysteine methyl ester is present on Cys-201. The S-farnesyl cysteine moiety is linked to residue Cys-201. A propeptide spans 202–204 (VIF) (removed in mature form).

This sequence belongs to the small GTPase superfamily. Ras family. Interacts with RASSF5. May be post-translationally modified by both palmitoylation and polyisoprenylation. In terms of processing, fatty-acylation at Lys-192, Lys-194; lys-196 and Lys-197 is required for localization to the plasma membrane and activity. Defatty-acylated by SIRT6, affecting its localization to the plasma membrane. As to expression, ubiquitously present in all tissues examined, with the highest levels in heart, placenta, and skeletal muscle. Moderate levels in lung and liver; low levels in brain, kidney, and pancreas.

The protein resides in the cell membrane. Its subcellular location is the golgi apparatus membrane. It catalyses the reaction GTP + H2O = GDP + phosphate + H(+). In terms of biological role, GTP-binding protein with GTPase activity, involved in the regulation of MAPK signaling pathway and thereby controlling multiple cellular processes. Regulates craniofacial development. The protein is Ras-related protein R-Ras2 of Homo sapiens (Human).